The following is a 306-amino-acid chain: BRCA2 and CDKN1A-interacting protein (306 aa).

The segment covering 1–10 (MASRPKRRAV) has biased composition (basic residues). A disordered region spans residues 1 to 45 (MASRPKRRAVSRVPPALGDEEEEDEVEEQDEDDSDEEEDEEDEVV). Residues 18–45 (GDEEEEDEVEEQDEDDSDEEEDEEDEVV) are compositionally biased toward acidic residues. Phosphoserine is present on residues serine 34 and serine 104. The tract at residues 51-159 (IEFEAYSISD…EKSMVEQLDR (109 aa)) is interaction with BRCA2. An interaction with CDKN1A region spans residues 153–251 (MVEQLDRLFN…NAEEEFFYEK (99 aa)). Phosphoserine is present on serine 273.

This sequence belongs to the BCP1 family. As to quaternary structure, interacts with BRCA2, CDKN1A and MTDH/LYRIC. Interacts with DCTN1/p150-glued and ACTR1A/ARP1. Interacts with alpha-, beta- and gamma-tubulins. Interacts with TENT5C; the interaction has no effect on TENT5C poly(A) polymerase function.

It is found in the nucleus. The protein localises to the cytoplasm. Its subcellular location is the cytoskeleton. It localises to the microtubule organizing center. The protein resides in the centrosome. It is found in the centriole. The protein localises to the spindle pole. In terms of biological role, during interphase, required for microtubule organizing and anchoring activities. During mitosis, required for the organization and stabilization of the spindle pole. May promote cell cycle arrest by enhancing the inhibition of CDK2 activity by CDKN1A. May be required for repair of DNA damage by homologous recombination in conjunction with BRCA2. May not be involved in non-homologous end joining (NHEJ). This chain is BRCA2 and CDKN1A-interacting protein (BCCIP), found in Bos taurus (Bovine).